A 348-amino-acid chain; its full sequence is Ubiquitin thioesterase OTU1 (348 aa).

The segment covering Met-1–Gly-11 has biased composition (basic residues). The interval Met-1 to Val-39 is disordered. The tract at residues Arg-50–Arg-128 is UBX-like. Positions Leu-149 to Asn-274 constitute an OTU domain. The tract at residues Val-154–Cys-160 is cys-loop. Residue Asp-157 is part of the active site. The active-site Nucleophile is Cys-160. The interval Ile-213 to Ile-223 is variable-loop. The interval Tyr-263–His-267 is his-loop. Ile-266 contributes to the substrate binding site. His-267 is an active-site residue. Positions Asp-291–Gln-296 are S2 site. Residues Leu-318–His-342 form a C2H2-type zinc finger. The active site involves His-342.

As to quaternary structure, interacts with VCP; the interaction is direct. Interacts with FAF2/UBXD8. Interacts with DERL1; however interaction is dependent on the UBAX-like region, suggesting that it may be indirect. Interacts with PLAA, UBXN6 and VCP; may form a complex involved in macroautophagy.

The protein localises to the cytoplasm. The catalysed reaction is Thiol-dependent hydrolysis of ester, thioester, amide, peptide and isopeptide bonds formed by the C-terminal Gly of ubiquitin (a 76-residue protein attached to proteins as an intracellular targeting signal).. In terms of biological role, hydrolase that can remove conjugated ubiquitin from proteins and participates in endoplasmic reticulum-associated degradation (ERAD) for misfolded lumenal proteins. May act by triming the ubiquitin chain on the associated substrate to facilitate their threading through the VCP/p97 pore. Ubiquitin moieties on substrates may present a steric impediment to the threading process when the substrate is transferred to the VCP pore and threaded through VCP's axial channel. Mediates deubiquitination of 'Lys-27'-, 'Lys-29'- and 'Lys-33'-linked polyubiquitin chains. Also able to hydrolyze 'Lys-11'-linked ubiquitin chains. Cleaves both polyubiquitin and di-ubiquitin. May play a role in macroautophagy, regulating for instance the clearance of damaged lysosomes. May recruit PLAA, UBXN6 and VCP to damaged lysosome membranes decorated with K48-linked ubiquitin chains and remove these chains allowing autophagosome formation. The chain is Ubiquitin thioesterase OTU1 (YOD1) from Homo sapiens (Human).